The sequence spans 255 residues: UDP-2,3-diacylglucosamine hydrolase (255 aa).

Mn(2+) contacts are provided by Asp8, His10, Asp41, Asn79, and His114. 79–80 (NR) contacts substrate. Substrate is bound by residues Asp122, Ser160, Asn164, Lys167, and His195. Mn(2+)-binding residues include His195 and His197.

The protein belongs to the LpxH family. Requires Mn(2+) as cofactor.

It is found in the cell inner membrane. The enzyme catalyses UDP-2-N,3-O-bis[(3R)-3-hydroxytetradecanoyl]-alpha-D-glucosamine + H2O = 2-N,3-O-bis[(3R)-3-hydroxytetradecanoyl]-alpha-D-glucosaminyl 1-phosphate + UMP + 2 H(+). It participates in glycolipid biosynthesis; lipid IV(A) biosynthesis; lipid IV(A) from (3R)-3-hydroxytetradecanoyl-[acyl-carrier-protein] and UDP-N-acetyl-alpha-D-glucosamine: step 4/6. Its function is as follows. Hydrolyzes the pyrophosphate bond of UDP-2,3-diacylglucosamine to yield 2,3-diacylglucosamine 1-phosphate (lipid X) and UMP by catalyzing the attack of water at the alpha-P atom. Involved in the biosynthesis of lipid A, a phosphorylated glycolipid that anchors the lipopolysaccharide to the outer membrane of the cell. This Hamiltonella defensa subsp. Acyrthosiphon pisum (strain 5AT) protein is UDP-2,3-diacylglucosamine hydrolase.